Reading from the N-terminus, the 322-residue chain is Glycerol-3-phosphate dehydrogenase [NAD(P)+] (322 aa).

Positions 11, 31, 32, and 101 each coordinate NADPH. 2 residues coordinate sn-glycerol 3-phosphate: K101 and G130. Residue A134 participates in NADPH binding. The sn-glycerol 3-phosphate site is built by K184, D237, S247, R248, and N249. K184 (proton acceptor) is an active-site residue. Residue R248 participates in NADPH binding. 2 residues coordinate NADPH: V270 and E272.

Belongs to the NAD-dependent glycerol-3-phosphate dehydrogenase family.

It localises to the cytoplasm. It catalyses the reaction sn-glycerol 3-phosphate + NAD(+) = dihydroxyacetone phosphate + NADH + H(+). The catalysed reaction is sn-glycerol 3-phosphate + NADP(+) = dihydroxyacetone phosphate + NADPH + H(+). It functions in the pathway membrane lipid metabolism; glycerophospholipid metabolism. Catalyzes the reduction of the glycolytic intermediate dihydroxyacetone phosphate (DHAP) to sn-glycerol 3-phosphate (G3P), the key precursor for phospholipid synthesis. The sequence is that of Glycerol-3-phosphate dehydrogenase [NAD(P)+] from Thermus thermophilus (strain ATCC BAA-163 / DSM 7039 / HB27).